The following is a 127-amino-acid chain: MRHRMKRNKLNRYGSHRRSLMRNLAKEIIEHGTIMTTTVKAKVGKEYIEKLITKAVKAYKIKDENKEESIALRRQLFAELGDRKLVNKLVDEIAPKYTGRNGGYTRVIKVGQRRGDGAEVSVLQIVE.

It belongs to the bacterial ribosomal protein bL17 family. In terms of assembly, part of the 50S ribosomal subunit. Contacts protein L32.

The chain is Large ribosomal subunit protein bL17 from Fervidobacterium nodosum (strain ATCC 35602 / DSM 5306 / Rt17-B1).